Here is a 587-residue protein sequence, read N- to C-terminus: MTTVRVNGMKNGIIKKVSGPVVSAENMDGAAMYELVRVGNEQLVGEIIRLEGSVATIQVYEETSGLTIGDPVLCTGSPLSVELGPGLMGNIFDGIQRPLEKIAERSNSVFIPRGVNVPALDRKKVWEFRPADNLKVGDPITAGDIYGIVPETPLIDHKIMLPPNQMGKIVFLAPPGDYTLEDTVLEIDFNGQKKKFSMVHQWPVRLPRPVTEKLRADKPLLTGQRVLDALFPSVQGGTCAIPGAFGCGKTVISQALSKFSNSDGIVYVGCGERGNEMAEVLKDFPELTMTVGDREESIMKRTLLVANTSNMPVAAREASIYTGITVSEYYRDMGLNISMMADSTSRWAEALREISGRLAEMPADSGYPAYLAARLASFYERAGKVSCLGSPNRQGSITIVGAVSPPGGDFSDPVTSATLGIVQVFWGLDKKLAQRKHFPSVNWLISYSKYMKALEPYYEERFPEFLNYQQKAREILQTEDDLMEIVQLVGKDSLAENDKITLEVAKMIREDFLAQNSFTEYDRFCPFYKSVLMLRNMIHFYELANKAVEGSGEQHLTLAQIKEQMGETIYKISGMKFLDPAQGWSLF.

243-250 (GAFGCGKT) provides a ligand contact to ATP.

The protein belongs to the ATPase alpha/beta chains family. In terms of assembly, V-ATPase is a heteromultimeric enzyme composed of a peripheral catalytic V1 complex (main components: subunits A, B, C, D, E, and F) attached to an integral membrane V0 proton pore complex (main component: the proteolipid protein).

It carries out the reaction ATP + H2O + 4 H(+)(in) = ADP + phosphate + 5 H(+)(out). Its function is as follows. Catalytic subunit of the peripheral V1 complex of vacuolar ATPase. V-ATPase vacuolar ATPase is responsible for acidifying a variety of intracellular compartments in eukaryotic cells. This chain is V-type proton ATPase catalytic subunit A, found in Cyanidium caldarium (Red alga).